Reading from the N-terminus, the 828-residue chain is Periplasmic nitrate reductase (828 aa).

The segment at residues 1 to 31 is a signal peptide (tat-type signal); that stretch reads MKLSRRSFMKANAVAAAAAAAGLSVPGVARA. The 4Fe-4S Mo/W bis-MGD-type domain maps to 39–95; that stretch reads IKWDKAPCRFCGTGCGVLVGTQQGRVVACQGDPDAPVNRGLNCIKGYFLPKIMYGKD. [4Fe-4S] cluster contacts are provided by Cys-46, Cys-49, Cys-53, and Cys-81. Residues Lys-83, Gln-150, Asn-175, Cys-179, 212–219, 243–247, 262–264, Met-372, Gln-376, Asn-482, 508–509, Lys-531, Asp-558, and 718–727 each bind Mo-bis(molybdopterin guanine dinucleotide); these read WGANMAEM, STYQH, QSD, SD, and TGRVLEHWHT. Substrate is bound at residue Phe-794. Residues Asn-802 and Lys-819 each contribute to the Mo-bis(molybdopterin guanine dinucleotide) site.

It belongs to the prokaryotic molybdopterin-containing oxidoreductase family. NasA/NapA/NarB subfamily. In terms of assembly, component of the periplasmic nitrate reductase NapAB complex composed of NapA and NapB. [4Fe-4S] cluster is required as a cofactor. The cofactor is Mo-bis(molybdopterin guanine dinucleotide). In terms of processing, predicted to be exported by the Tat system. The position of the signal peptide cleavage has not been experimentally proven.

It localises to the periplasm. It catalyses the reaction 2 Fe(II)-[cytochrome] + nitrate + 2 H(+) = 2 Fe(III)-[cytochrome] + nitrite + H2O. In terms of biological role, catalytic subunit of the periplasmic nitrate reductase complex NapAB. Receives electrons from NapB and catalyzes the reduction of nitrate to nitrite. In Escherichia coli O8 (strain IAI1), this protein is Periplasmic nitrate reductase.